We begin with the raw amino-acid sequence, 159 residues long: Vesicle transport protein SFT2A (159 aa).

Over 1-36 (MEKLRRVLSGQDDEEQGLTAQVLDASSLSFNTRLKW) the chain is Cytoplasmic. Position 9 is a phosphoserine (S9). Residues 37–57 (FAICFVCGVFFSILGTGLLWL) traverse the membrane as a helical segment. Residues 58–62 (PGGIK) lie on the Lumenal side of the membrane. Residues 63-83 (LFAVFYTLGNLAALASTCFLM) form a helical membrane-spanning segment. The Cytoplasmic segment spans residues 84–97 (GPVKQLKKMFEATR). A helical membrane pass occupies residues 98 to 118 (LLATIVMLLCFIFTLCAALWW). The Lumenal segment spans residues 119 to 122 (HKKG). A helical membrane pass occupies residues 123–143 (LAVLFCILQFLSMTWYSLSYI). At 144–159 (PYARDAVIKCCSSLLS) the chain is on the cytoplasmic side.

It belongs to the SFT2 family.

The protein resides in the membrane. In terms of biological role, may be involved in fusion of retrograde transport vesicles derived from an endocytic compartment with the Golgi complex. This chain is Vesicle transport protein SFT2A, found in Homo sapiens (Human).